The primary structure comprises 505 residues: Lysine--tRNA ligase (505 aa).

The Mg(2+) site is built by glutamate 415 and glutamate 422.

The protein belongs to the class-II aminoacyl-tRNA synthetase family. In terms of assembly, homodimer. Requires Mg(2+) as cofactor.

The protein resides in the cytoplasm. It carries out the reaction tRNA(Lys) + L-lysine + ATP = L-lysyl-tRNA(Lys) + AMP + diphosphate. This chain is Lysine--tRNA ligase (lysS), found in Salmonella typhimurium (strain LT2 / SGSC1412 / ATCC 700720).